The following is a 207-amino-acid chain: NADH-quinone oxidoreductase subunit C (207 aa).

This sequence belongs to the complex I 30 kDa subunit family. As to quaternary structure, NDH-1 is composed of 14 different subunits. Subunits NuoB, C, D, E, F, and G constitute the peripheral sector of the complex.

It is found in the cell inner membrane. It catalyses the reaction a quinone + NADH + 5 H(+)(in) = a quinol + NAD(+) + 4 H(+)(out). In terms of biological role, NDH-1 shuttles electrons from NADH, via FMN and iron-sulfur (Fe-S) centers, to quinones in the respiratory chain. The immediate electron acceptor for the enzyme in this species is believed to be ubiquinone. Couples the redox reaction to proton translocation (for every two electrons transferred, four hydrogen ions are translocated across the cytoplasmic membrane), and thus conserves the redox energy in a proton gradient. In Jannaschia sp. (strain CCS1), this protein is NADH-quinone oxidoreductase subunit C.